A 254-amino-acid chain; its full sequence is Phosphoribosylaminoimidazole-succinocarboxamide synthase (254 aa).

This sequence belongs to the SAICAR synthetase family.

The enzyme catalyses 5-amino-1-(5-phospho-D-ribosyl)imidazole-4-carboxylate + L-aspartate + ATP = (2S)-2-[5-amino-1-(5-phospho-beta-D-ribosyl)imidazole-4-carboxamido]succinate + ADP + phosphate + 2 H(+). The protein operates within purine metabolism; IMP biosynthesis via de novo pathway; 5-amino-1-(5-phospho-D-ribosyl)imidazole-4-carboxamide from 5-amino-1-(5-phospho-D-ribosyl)imidazole-4-carboxylate: step 1/2. The chain is Phosphoribosylaminoimidazole-succinocarboxamide synthase from Rhizobium meliloti (strain 1021) (Ensifer meliloti).